Consider the following 506-residue polypeptide: Bifunctional purine biosynthesis protein PurH (506 aa).

The region spanning 1–142 is the MGS-like domain; sequence MRAIISVYRK…KNFFRVVILV (142 aa).

This sequence belongs to the PurH family.

The enzyme catalyses (6R)-10-formyltetrahydrofolate + 5-amino-1-(5-phospho-beta-D-ribosyl)imidazole-4-carboxamide = 5-formamido-1-(5-phospho-D-ribosyl)imidazole-4-carboxamide + (6S)-5,6,7,8-tetrahydrofolate. The catalysed reaction is IMP + H2O = 5-formamido-1-(5-phospho-D-ribosyl)imidazole-4-carboxamide. It functions in the pathway purine metabolism; IMP biosynthesis via de novo pathway; 5-formamido-1-(5-phospho-D-ribosyl)imidazole-4-carboxamide from 5-amino-1-(5-phospho-D-ribosyl)imidazole-4-carboxamide (10-formyl THF route): step 1/1. The protein operates within purine metabolism; IMP biosynthesis via de novo pathway; IMP from 5-formamido-1-(5-phospho-D-ribosyl)imidazole-4-carboxamide: step 1/1. The polypeptide is Bifunctional purine biosynthesis protein PurH (Aquifex aeolicus (strain VF5)).